Reading from the N-terminus, the 474-residue chain is Trigger factor (474 aa).

Residues 174–261 (GDIAVVSFKG…LKDLKEKELP (88 aa)) form the PPIase FKBP-type domain. Residues 435-474 (VKEKTTKTSKATKTSKTTKATKTASKTTKTTKTQNKKEKK) are disordered. Over residues 442–467 (TSKATKTSKTTKATKTASKTTKTTKT) the composition is skewed to low complexity.

This sequence belongs to the FKBP-type PPIase family. Tig subfamily.

Its subcellular location is the cytoplasm. The enzyme catalyses [protein]-peptidylproline (omega=180) = [protein]-peptidylproline (omega=0). Functionally, involved in protein export. Acts as a chaperone by maintaining the newly synthesized protein in an open conformation. Functions as a peptidyl-prolyl cis-trans isomerase. The sequence is that of Trigger factor from Prochlorococcus marinus (strain AS9601).